The chain runs to 616 residues: Tumor necrosis factor receptor superfamily member 11A (616 aa).

Residues 1–29 form the signal peptide; sequence MAPRARRRRPLFALLLLCALLARLQVALQ. Residues 30-212 lie on the Extracellular side of the membrane; the sequence is IAPPCTSEKH…PPNEPHVYLP (183 aa). Disulfide bonds link cysteine 34–cysteine 46, cysteine 47–cysteine 60, cysteine 50–cysteine 68, cysteine 71–cysteine 86, cysteine 92–cysteine 112, cysteine 114–cysteine 127, cysteine 124–cysteine 126, cysteine 133–cysteine 151, and cysteine 154–cysteine 169. TNFR-Cys repeat units follow at residues 34–68, 71–112, 114–151, and 154–194; these read CTSE…DSVC, CGPD…PRRC, CTAG…DTVC, and CLAG…DAVC. Asparagine 105 is a glycosylation site (N-linked (GlcNAc...) asparagine). 3 residues coordinate Na(+): cysteine 133, alanine 134, and serine 160. A glycan (N-linked (GlcNAc...) asparagine) is linked at asparagine 174. The cysteines at positions 175 and 194 are disulfide-linked. The chain crosses the membrane as a helical span at residues 213–233; that stretch reads GLIILLLFASVALVAAIIFGV. Residues 234–616 lie on the Cytoplasmic side of the membrane; it reads CYRKKGKALT…PVQEQGGAKA (383 aa). Residues 468–536 are disordered; that stretch reads PLPQCAYGMG…GNSNSTFISS (69 aa). Over residues 483-493 the composition is skewed to basic and acidic residues; the sequence is EASRTEARDQP. Over residues 499–508 the composition is skewed to low complexity; the sequence is GRLPSSARAG. The segment covering 524–536 has biased composition (polar residues); sequence NVTGNSNSTFISS. The interval 544–549 is required for interaction with EEIG1 and osteoclast differentiation; it reads GDIIVV. The segment at 556–616 is disordered; sequence QEGAAAAAEP…PVQEQGGAKA (61 aa). Over residues 570–580 the composition is skewed to basic and acidic residues; the sequence is VQEETLARRDS. Serine 580 is modified (phosphoserine).

Binds to the clefts between the subunits of the TNFSF11 ligand trimer to form a heterohexamer. Part of a complex composed of EEIG1, TNFRSF11A/RANK, PLCG2, GAB2, TEC and BTK; complex formation increases in the presence of TNFSF11/RANKL. Interacts with TRAF1, TRAF2, TRAF3, TRAF5 and TRAF6. Interacts (via cytoplasmic domain) with GAB2. Interacts (via cytoplasmic domain); with EEIG1 (via N-terminus); when in the presence of TNFSF11/RANKL. In terms of tissue distribution, ubiquitous expression with high levels in skeletal muscle, thymus, liver, colon, small intestine and adrenal gland.

The protein localises to the cell membrane. The protein resides in the membrane raft. In terms of biological role, receptor for TNFSF11/RANKL/TRANCE/OPGL; essential for RANKL-mediated osteoclastogenesis. Its interaction with EEIG1 promotes osteoclastogenesis via facilitating the transcription of NFATC1 and activation of PLCG2. Involved in the regulation of interactions between T-cells and dendritic cells. The polypeptide is Tumor necrosis factor receptor superfamily member 11A (TNFRSF11A) (Homo sapiens (Human)).